A 521-amino-acid polypeptide reads, in one-letter code: Cytochrome P450 1A1 (521 aa).

Phenylalanine 229 is a binding site for substrate. A heme-binding site is contributed by cysteine 463.

The protein belongs to the cytochrome P450 family. Requires heme as cofactor.

It localises to the endoplasmic reticulum membrane. The protein localises to the microsome membrane. It carries out the reaction an organic molecule + reduced [NADPH--hemoprotein reductase] + O2 = an alcohol + oxidized [NADPH--hemoprotein reductase] + H2O + H(+). Cytochromes P450 are a group of heme-thiolate monooxygenases. They oxidize a variety of structurally unrelated compounds, including steroids, fatty acids, and xenobiotics. The chain is Cytochrome P450 1A1 (cyp1a1) from Oryzias latipes (Japanese rice fish).